Consider the following 256-residue polypeptide: Peptidyl-prolyl cis-trans isomerase FKBP19, chloroplastic (256 aa).

Residues 1 to 29 (MASISSFGCFPQSTALAGTSSTTRCRTTV) constitute a chloroplast transit peptide. The transit peptide at 30 to 88 (AARLADQSDDFAPLRSSGGNCGCVNNSGEFDRRKLLVSSVGLLIGALSYDSKDGDFASA) directs the protein to the thylakoid. Residues 135 to 254 (GDKVVVDWDG…LFDVELLKIV (120 aa)) form the PPIase FKBP-type domain. Residue S164 is modified to Phosphoserine.

This sequence belongs to the FKBP-type PPIase family.

The protein resides in the plastid. It is found in the chloroplast thylakoid lumen. The catalysed reaction is [protein]-peptidylproline (omega=180) = [protein]-peptidylproline (omega=0). PPIases accelerate the folding of proteins. It catalyzes the cis-trans isomerization of proline imidic peptide bonds in oligopeptides. This is Peptidyl-prolyl cis-trans isomerase FKBP19, chloroplastic (FKBP19) from Arabidopsis thaliana (Mouse-ear cress).